Reading from the N-terminus, the 113-residue chain is Tubulin alpha chain (113 aa).

Residue Glu52 coordinates GTP. Glu52 provides a ligand contact to Mg(2+).

It belongs to the tubulin family. As to quaternary structure, dimer of alpha and beta chains. A typical microtubule is a hollow water-filled tube with an outer diameter of 25 nm and an inner diameter of 15 nM. Alpha-beta heterodimers associate head-to-tail to form protofilaments running lengthwise along the microtubule wall with the beta-tubulin subunit facing the microtubule plus end conferring a structural polarity. Microtubules usually have 13 protofilaments but different protofilament numbers can be found in some organisms and specialized cells. Mg(2+) serves as cofactor.

Its subcellular location is the cytoplasm. The protein localises to the cytoskeleton. It carries out the reaction GTP + H2O = GDP + phosphate + H(+). Tubulin is the major constituent of microtubules, a cylinder consisting of laterally associated linear protofilaments composed of alpha- and beta-tubulin heterodimers. Microtubules grow by the addition of GTP-tubulin dimers to the microtubule end, where a stabilizing cap forms. Below the cap, tubulin dimers are in GDP-bound state, owing to GTPase activity of alpha-tubulin. The sequence is that of Tubulin alpha chain (TUBA) from Picea abies (Norway spruce).